We begin with the raw amino-acid sequence, 25 residues long: Omega conotoxin-CVIF (25 aa).

Cystine bridges form between cysteine 1-cysteine 16, cysteine 8-cysteine 20, and cysteine 15-cysteine 25. Cysteine amide is present on cysteine 25.

Belongs to the conotoxin O1 superfamily. As to expression, expressed by the venom duct.

It is found in the secreted. Functionally, omega-conotoxins act at presynaptic membranes, they bind and block voltage-gated calcium channels. This toxin blocks N-type calcium channels (Cav2.2/CACNA1B). It shows a higher potency when Cav2.2/CACNA1B is only expressed with the ancillary subunit CACNB3 (IC(50)=0.1 nM) than on Cav2.2/CACNA1B expressed with the ancillary subunits CACNA2D1 and CACNB3 (IC(50)=19.9 nM). The Cav2.2/CACNA1B block by this toxin is voltage-independent, whereas the recovery from toxin block is voltage-dependent. There is a low recovery at physiological membrane potential and a high recovery with hyperpolarized potential. This indicates that the toxin has a higher affinity for Cav2.2/CACNA1B in the inactivated state. It is noteworthy that ancillary subunits beta modulate recovery from this toxin block. Cav2.2/CACNA1B expressed with the ancillary subunit CACNB2a (isoform 2a) almost recover completely from this toxin block, whereas an expression with CACNB3 exhibits relatively weak recovery. Inhibition by this toxin of excitatory synaptic transmission is reversible. In vivo, when tested on rat model of persistent pain, this toxin blocks chronic pain behavior. The chain is Omega conotoxin-CVIF from Conus catus (Cat cone).